The sequence spans 697 residues: uncharacterized protein (697 aa).

The next 14 helical transmembrane spans lie at 65 to 85, 106 to 126, 131 to 151, 163 to 183, 194 to 214, 227 to 247, 286 to 306, 316 to 336, 361 to 381, 394 to 414, 419 to 439, 450 to 470, 487 to 507, and 558 to 578; these read PVRN…VGIY, CTFR…LHNF, YRQS…EKAI, DAAL…DINE, LSSY…VPLG, TSAT…TASI, STNA…ANKD, PVTD…VLLE, SDEI…PEGV, MFEL…MAWE, ERML…EPYH, SVKR…YLAI, QGSQ…YKVW, and TSAG…HHRQ. Residues 246 to 321 are disordered; sequence SINVRTSATT…NRFHPVTDIN (76 aa). Over residues 251-298 the composition is skewed to low complexity; the sequence is TSATTTESTNSNTNATTTESTNSSTNATTTASTNSSTNATTTESTNAS. The segment covering 299–321 has biased composition (basic and acidic residues); the sequence is AKEDANKDGNAEDNRFHPVTDIN.

It is found in the membrane. This is an uncharacterized protein from Saccharomyces cerevisiae (strain ATCC 204508 / S288c) (Baker's yeast).